An 89-amino-acid polypeptide reads, in one-letter code: MALTAEQKKEILGQYGLHDTDTGSPEAQVALLTKRIQDLTEHLKVHKHDHHSRRGLLLLVGRRRRLLKYVAQVDVARYRSLIERLGLRR.

It belongs to the universal ribosomal protein uS15 family. As to quaternary structure, part of the 30S ribosomal subunit. Forms a bridge to the 50S subunit in the 70S ribosome, contacting the 23S rRNA.

In terms of biological role, one of the primary rRNA binding proteins, it binds directly to 16S rRNA where it helps nucleate assembly of the platform of the 30S subunit by binding and bridging several RNA helices of the 16S rRNA. Functionally, forms an intersubunit bridge (bridge B4) with the 23S rRNA of the 50S subunit in the ribosome. The sequence is that of Small ribosomal subunit protein uS15 from Mycolicibacterium smegmatis (strain ATCC 700084 / mc(2)155) (Mycobacterium smegmatis).